We begin with the raw amino-acid sequence, 448 residues long: uncharacterized protein (448 aa).

12 helical membrane-spanning segments follow: residues proline 14 to isoleucine 34, threonine 59 to alanine 79, valine 87 to asparagine 107, glycine 120 to alanine 140, glycine 148 to valine 168, serine 171 to leucine 191, isoleucine 250 to threonine 270, leucine 288 to valine 308, isoleucine 316 to isoleucine 333, threonine 338 to phenylalanine 358, phenylalanine 392 to phenylalanine 412, and phenylalanine 417 to alanine 437.

It belongs to the major facilitator superfamily. TCR/Tet family.

It localises to the endoplasmic reticulum. The protein resides in the membrane. This is an uncharacterized protein from Schizosaccharomyces pombe (strain 972 / ATCC 24843) (Fission yeast).